Reading from the N-terminus, the 704-residue chain is Fatty acid oxidation complex subunit alpha (704 aa).

The enoyl-CoA hydratase stretch occupies residues 1–190 (MSEQKAFSLK…KLGVVDACVP (190 aa)). The 3-hydroxyacyl-CoA dehydrogenase stretch occupies residues 308-704 (TAVNKVGVLG…RAGEGRNFYD (397 aa)).

The protein in the N-terminal section; belongs to the enoyl-CoA hydratase/isomerase family. In the central section; belongs to the 3-hydroxyacyl-CoA dehydrogenase family. As to quaternary structure, heterotetramer of two alpha chains (FadJ) and two beta chains (FadI).

Its subcellular location is the cytoplasm. The catalysed reaction is a (3S)-3-hydroxyacyl-CoA = a (2E)-enoyl-CoA + H2O. It catalyses the reaction a 4-saturated-(3S)-3-hydroxyacyl-CoA = a (3E)-enoyl-CoA + H2O. The enzyme catalyses a (3S)-3-hydroxyacyl-CoA + NAD(+) = a 3-oxoacyl-CoA + NADH + H(+). It carries out the reaction (3S)-3-hydroxybutanoyl-CoA = (3R)-3-hydroxybutanoyl-CoA. It participates in lipid metabolism; fatty acid beta-oxidation. Its function is as follows. Catalyzes the formation of a hydroxyacyl-CoA by addition of water on enoyl-CoA. Also exhibits 3-hydroxyacyl-CoA epimerase and 3-hydroxyacyl-CoA dehydrogenase activities. The sequence is that of Fatty acid oxidation complex subunit alpha from Vibrio campbellii (strain ATCC BAA-1116).